We begin with the raw amino-acid sequence, 197 residues long: FMN-dependent NADH:quinone oxidoreductase (197 aa).

Residues S10, 16-18 (SKS), and 96-99 (MYNF) each bind FMN.

This sequence belongs to the azoreductase type 1 family. In terms of assembly, homodimer. Requires FMN as cofactor.

The catalysed reaction is 2 a quinone + NADH + H(+) = 2 a 1,4-benzosemiquinone + NAD(+). It catalyses the reaction N,N-dimethyl-1,4-phenylenediamine + anthranilate + 2 NAD(+) = 2-(4-dimethylaminophenyl)diazenylbenzoate + 2 NADH + 2 H(+). In terms of biological role, quinone reductase that provides resistance to thiol-specific stress caused by electrophilic quinones. Functionally, also exhibits azoreductase activity. Catalyzes the reductive cleavage of the azo bond in aromatic azo compounds to the corresponding amines. The chain is FMN-dependent NADH:quinone oxidoreductase from Marinomonas sp. (strain MWYL1).